Consider the following 365-residue polypeptide: 5-hydroxytryptamine receptor 1E (365 aa).

Residues 1 to 21 lie on the Extracellular side of the membrane; that stretch reads MNITNCTTEASMAIRPKTITE. N-linked (GlcNAc...) asparagine glycosylation is found at N2 and N5. The chain crosses the membrane as a helical span at residues 22-45; the sequence is KMLICMTLVVITTLTTLLNLAVIM. Residues 46-59 lie on the Cytoplasmic side of the membrane; the sequence is AIGTTKKLHQPANY. A helical transmembrane segment spans residues 60-84; the sequence is LICSLAVTDLLVAVLVMPLSIIYIV. The Extracellular portion of the chain corresponds to 85-92; sequence MDRWKLGY. A helical transmembrane segment spans residues 93–118; it reads FLCEVWLSVDMTCCTCSILHLCVIAL. An intrachain disulfide couples C95 to C173. Serotonin is bound by residues D102 and C106. Residues 119–121 carry the DRY motif; important for ligand-induced conformation changes motif; sequence DRY. The Cytoplasmic segment spans residues 119–138; that stretch reads DRYWAITNAIEYARKRTAKR. Residues 139 to 157 traverse the membrane as a helical segment; sequence AALMILTVWTISIFISMPP. Residues 158–179 lie on the Extracellular side of the membrane; that stretch reads LFWRSHRRLSPPPSQCTIQHDH. The chain crosses the membrane as a helical span at residues 180 to 203; sequence VIYTIYSTLGAFYIPLTLILILYY. Residues 204 to 291 lie on the Cytoplasmic side of the membrane; that stretch reads RIYHAAKSLY…SSTRERKAAR (88 aa). A helical membrane pass occupies residues 292–316; that stretch reads ILGLILGAFILSWLPFFIKELIVGL. The Extracellular segment spans residues 317-322; that stretch reads SIYTVS. A helical transmembrane segment spans residues 323–345; it reads SEVADFLTWLGYVNSLINPLLYT. Positions 340-344 match the NPxxY motif; important for ligand-induced conformation changes and signaling motif; it reads NPLLY. Residues 346–365 are Cytoplasmic-facing; that stretch reads SFNEDFKLAFKKLIRCREHT.

Belongs to the G-protein coupled receptor 1 family. Detected in brain.

It is found in the cell membrane. Its function is as follows. G-protein coupled receptor for 5-hydroxytryptamine (serotonin). Also functions as a receptor for various alkaloids and psychoactive substances. Ligand binding causes a conformation change that triggers signaling via guanine nucleotide-binding proteins (G proteins) and modulates the activity of downstream effectors, such as adenylate cyclase. HTR1E is coupled to G(i)/G(o) G alpha proteins and mediates inhibitory neurotransmission by inhibiting adenylate cyclase activity. The chain is 5-hydroxytryptamine receptor 1E from Homo sapiens (Human).